Here is a 694-residue protein sequence, read N- to C-terminus: MQTSPDMFINRELSWLRFNSRVLDQCSKNLPLLEKLKFIAIYCTNLDEFYMIRVAGLKQLFSAGVNASSSDEMTPLQQLKAIRKYLHQEKELLERYFNEITSELEKENLFIKHYENLDENLKQKCDEYFFSNIFPVIVPIAVDATHPFPHLNNLSFSLAVKICDKAHPELVKFGMIRIPRVLPRFYEVSANIYVPIESIVHQHAEEIFPGYKLLASAAFRVTRNADMVIEEEEADDFMMILEQGLKLRRKGAFVRLQIQKDADEQIVEFLNTHMKIFHKDVYEYSILLNLPSLWQIAGNKTFTHLLSPLYTPKTLPPFDENLSIFDAVEKEDILIIQPFESFDPVYKFIKEASKDPEVISIRMTLYRVEKNSNIVQALIDAASDGKQVTVMVELKARFDEENNLHWAKALENAGAHVIYGITGFKVHAKVSQVIRKQGDKLKFYMHLSTGNYNASSAKIYTDVSYFTSKAEFARDTTSFFHILSGFSKNRRLQTLSMSPNQIKEKVLEMIRIETSKKNEGVIVAKMNSLVDSDIIQALYEASMEGVQIDLIIRGICCLKPDEEYSKNIRVRSIIGKYLEHARVFYFKHSEPNYFISSADWMPRNLERRLELMTPIYDERSKAKLAQFLRLQLSDNVLAYKLKNNGEYEKIPSSEKIIDSQQTLEEYVSKIYKTLKKDTDQSRATHLASKLFKEN.

ATP is bound at residue Asn-45. The Mg(2+) site is built by Arg-367 and Arg-397. His-427 (phosphohistidine intermediate) is an active-site residue. Residues Tyr-460, Arg-553, and His-580 each contribute to the ATP site.

This sequence belongs to the polyphosphate kinase 1 (PPK1) family. The cofactor is Mg(2+). Post-translationally, an intermediate of this reaction is the autophosphorylated ppk in which a phosphate is covalently linked to a histidine residue through a N-P bond.

It carries out the reaction [phosphate](n) + ATP = [phosphate](n+1) + ADP. In terms of biological role, catalyzes the reversible transfer of the terminal phosphate of ATP to form a long-chain polyphosphate (polyP). In Campylobacter jejuni (strain RM1221), this protein is Polyphosphate kinase.